The following is a 317-amino-acid chain: Probable cell division protein WhiA (317 aa).

Positions 267–300 (SLKELGEMLHPPVGKSGVNHRLRRLELIARQVRG) form a DNA-binding region, H-T-H motif.

It belongs to the WhiA family.

In terms of biological role, involved in cell division and chromosome segregation. The protein is Probable cell division protein WhiA of Moorella thermoacetica (strain ATCC 39073 / JCM 9320).